A 957-amino-acid chain; its full sequence is Iron-responsive element-binding protein 2 (957 aa).

[4Fe-4S] cluster contacts are provided by Cys506, Cys572, and Cys575.

It belongs to the aconitase/IPM isomerase family. The cofactor is [4Fe-4S] cluster. Post-translationally, ubiquitinated and degraded by the proteasome in presence of high level of iron and oxygen.

It is found in the cytoplasm. In terms of biological role, RNA-binding protein that binds to iron-responsive elements (IRES), which are stem-loop structures found in the 5'-UTR of ferritin, and delta aminolevulinic acid synthase mRNAs, and in the 3'-UTR of transferrin receptor mRNA. Binding to the IRE element in ferritin results in the repression of its mRNA translation. Binding of the protein to the transferrin receptor mRNA inhibits the degradation of this otherwise rapidly degraded mRNA. This chain is Iron-responsive element-binding protein 2 (ireb2), found in Xenopus tropicalis (Western clawed frog).